Here is a 329-residue protein sequence, read N- to C-terminus: GTP 3',8-cyclase (329 aa).

Positions 8–234 constitute a Radical SAM core domain; the sequence is AFARKFYYLR…QLRQRSDGPA (227 aa). A GTP-binding site is contributed by Arg17. [4Fe-4S] cluster-binding residues include Cys24 and Cys28. Tyr30 contacts S-adenosyl-L-methionine. Cys31 is a [4Fe-4S] cluster binding site. Position 68 (Arg68) interacts with GTP. Residue Gly72 participates in S-adenosyl-L-methionine binding. Residue Thr99 coordinates GTP. S-adenosyl-L-methionine is bound at residue Ser123. A GTP-binding site is contributed by Lys160. Met194 is a binding site for S-adenosyl-L-methionine. [4Fe-4S] cluster contacts are provided by Cys257 and Cys260. 262–264 provides a ligand contact to GTP; that stretch reads RLR. Residue Cys274 participates in [4Fe-4S] cluster binding.

Belongs to the radical SAM superfamily. MoaA family. As to quaternary structure, monomer and homodimer. It depends on [4Fe-4S] cluster as a cofactor.

It catalyses the reaction GTP + AH2 + S-adenosyl-L-methionine = (8S)-3',8-cyclo-7,8-dihydroguanosine 5'-triphosphate + 5'-deoxyadenosine + L-methionine + A + H(+). Its pathway is cofactor biosynthesis; molybdopterin biosynthesis. Its function is as follows. Catalyzes the cyclization of GTP to (8S)-3',8-cyclo-7,8-dihydroguanosine 5'-triphosphate. This Shigella boydii serotype 18 (strain CDC 3083-94 / BS512) protein is GTP 3',8-cyclase.